Consider the following 358-residue polypeptide: Plancitoxin-1 (358 aa).

Residues Met-1 to Ala-26 form the signal peptide. N-linked (GlcNAc...) asparagine glycosylation is present at Asn-274. The active site involves His-303.

This sequence belongs to the DNase II family. As to quaternary structure, plancitoxin is a heterodimer of alpha and beta subunits; disulfide-linked by a single disulfide bond. Venom gland.

The protein resides in the secreted. The enzyme catalyses Endonucleolytic cleavage to nucleoside 3'-phosphates and 3'-phosphooligonucleotide end-products.. In terms of biological role, hydrolyzes DNA with an optimum pH of 7.2. Is potently hepatotoxic. It induces caspase-independent apoptosis (on rat liver cells) through the following procedure: binding to a specific receptor in the cytoplasmic membrane, entering the cell, entering the nucleus and degrading DNA. The chain is Plancitoxin-1 from Acanthaster planci (Crown-of-thorns starfish).